A 210-amino-acid polypeptide reads, in one-letter code: Glutathione S-transferase P 2 (210 aa).

A GST N-terminal domain is found at 1–82 (SGYTLTYFPL…LLARYGLSGS (82 aa)). Residues Y7, R13, W38, K46, 53 to 54 (QI), and 66 to 67 (QS) each bind glutathione. Residues 83–204 (NEREIAINEM…KSEGRKRRPI (122 aa)) enclose the GST C-terminal domain.

Belongs to the GST superfamily. Pi family. Homodimer. In terms of tissue distribution, liver, kidney, muscle, skin, lung and ovary.

The catalysed reaction is RX + glutathione = an S-substituted glutathione + a halide anion + H(+). Functionally, conjugation of reduced glutathione to a wide number of exogenous and endogenous hydrophobic electrophiles. The protein is Glutathione S-transferase P 2 of Bufo bufo (European toad).